Reading from the N-terminus, the 138-residue chain is Large ribosomal subunit protein bL19 (138 aa).

The protein belongs to the bacterial ribosomal protein bL19 family.

This protein is located at the 30S-50S ribosomal subunit interface and may play a role in the structure and function of the aminoacyl-tRNA binding site. The chain is Large ribosomal subunit protein bL19 from Rickettsia typhi (strain ATCC VR-144 / Wilmington).